Here is a 265-residue protein sequence, read N- to C-terminus: Imidazole glycerol phosphate synthase subunit HisF (265 aa).

Residues Asp17 and Asp136 contribute to the active site.

This sequence belongs to the HisA/HisF family. Heterodimer of HisH and HisF.

Its subcellular location is the cytoplasm. It catalyses the reaction 5-[(5-phospho-1-deoxy-D-ribulos-1-ylimino)methylamino]-1-(5-phospho-beta-D-ribosyl)imidazole-4-carboxamide + L-glutamine = D-erythro-1-(imidazol-4-yl)glycerol 3-phosphate + 5-amino-1-(5-phospho-beta-D-ribosyl)imidazole-4-carboxamide + L-glutamate + H(+). Its pathway is amino-acid biosynthesis; L-histidine biosynthesis; L-histidine from 5-phospho-alpha-D-ribose 1-diphosphate: step 5/9. Its function is as follows. IGPS catalyzes the conversion of PRFAR and glutamine to IGP, AICAR and glutamate. The HisF subunit catalyzes the cyclization activity that produces IGP and AICAR from PRFAR using the ammonia provided by the HisH subunit. The protein is Imidazole glycerol phosphate synthase subunit HisF of Mycolicibacterium paratuberculosis (strain ATCC BAA-968 / K-10) (Mycobacterium paratuberculosis).